The sequence spans 82 residues: MSDKIRTLQGRVTSNKMDKSITVAVERLVKHPIYGKFIKRTTKIHAHDELNQCNEGDIVTIRECRPLSKTKSWTLVDVVSKA.

It belongs to the universal ribosomal protein uS17 family. In terms of assembly, part of the 30S ribosomal subunit.

One of the primary rRNA binding proteins, it binds specifically to the 5'-end of 16S ribosomal RNA. The protein is Small ribosomal subunit protein uS17 of Shewanella amazonensis (strain ATCC BAA-1098 / SB2B).